Here is a 290-residue protein sequence, read N- to C-terminus: 33 kDa chaperonin (290 aa).

Intrachain disulfides connect Cys231-Cys233 and Cys263-Cys266.

This sequence belongs to the HSP33 family. In terms of processing, under oxidizing conditions two disulfide bonds are formed involving the reactive cysteines. Under reducing conditions zinc is bound to the reactive cysteines and the protein is inactive.

Its subcellular location is the cytoplasm. Its function is as follows. Redox regulated molecular chaperone. Protects both thermally unfolding and oxidatively damaged proteins from irreversible aggregation. Plays an important role in the bacterial defense system toward oxidative stress. The sequence is that of 33 kDa chaperonin from Thermotoga sp. (strain RQ2).